We begin with the raw amino-acid sequence, 98 residues long: NADH-ubiquinone oxidoreductase chain 4L (98 aa).

The next 3 membrane-spanning stretches (helical) occupy residues 2–22 (PSIS…MLVF), 29–49 (SLLC…LTIM), and 61–81 (ILLL…LVMM).

It belongs to the complex I subunit 4L family. In terms of assembly, core subunit of respiratory chain NADH dehydrogenase (Complex I) which is composed of 45 different subunits.

The protein localises to the mitochondrion inner membrane. It carries out the reaction a ubiquinone + NADH + 5 H(+)(in) = a ubiquinol + NAD(+) + 4 H(+)(out). In terms of biological role, core subunit of the mitochondrial membrane respiratory chain NADH dehydrogenase (Complex I) which catalyzes electron transfer from NADH through the respiratory chain, using ubiquinone as an electron acceptor. Part of the enzyme membrane arm which is embedded in the lipid bilayer and involved in proton translocation. The polypeptide is NADH-ubiquinone oxidoreductase chain 4L (MT-ND4L) (Lepilemur seali (Seal's sportive lemur)).